A 208-amino-acid chain; its full sequence is Putative 3-methyladenine DNA glycosylase (208 aa).

Positions 1-20 are disordered; the sequence is MGRAHTVSRGEDHPPIARSE.

Belongs to the DNA glycosylase MPG family.

The protein is Putative 3-methyladenine DNA glycosylase of Mesorhizobium japonicum (strain LMG 29417 / CECT 9101 / MAFF 303099) (Mesorhizobium loti (strain MAFF 303099)).